We begin with the raw amino-acid sequence, 500 residues long: NAD(P)H-quinone oxidoreductase chain 4, chloroplastic (500 aa).

Helical transmembrane passes span 4-24, 35-55, 87-107, 134-154, 167-187, 211-231, 242-262, 272-292, 305-325, 330-350, 386-406, 416-436, and 462-482; these read FPWL…MLFL, YTIS…CYNF, IGTI…AFPV, LLLF…LLSM, FILY…GISL, ILFY…IPLH, HYST…YGLV, AHSM…IYAA, IAYS…SITD, GAIL…FLAG, LALP…GIIT, IFII…LLSM, and LFLS…PDFV.

Belongs to the complex I subunit 4 family.

It is found in the plastid. It localises to the chloroplast thylakoid membrane. It catalyses the reaction a plastoquinone + NADH + (n+1) H(+)(in) = a plastoquinol + NAD(+) + n H(+)(out). The enzyme catalyses a plastoquinone + NADPH + (n+1) H(+)(in) = a plastoquinol + NADP(+) + n H(+)(out). This is NAD(P)H-quinone oxidoreductase chain 4, chloroplastic from Crucihimalaya wallichii (Rock-cress).